We begin with the raw amino-acid sequence, 128 residues long: Fluoride-specific ion channel FluC (128 aa).

4 helical membrane-spanning segments follow: residues 2-22 (LTFAPLNFLAIGVGATLGAWL), 37-57 (WGTLTANLVGGYLIGVMVALI), 65-85 (AWIRLAAVTGFLGGLTTFSTF), and 101-121 (AAAYAGASLAGSLAMTGLGLA). Na(+) is bound by residues Gly-77 and Thr-80.

Belongs to the fluoride channel Fluc/FEX (TC 1.A.43) family.

The protein resides in the cell inner membrane. It carries out the reaction fluoride(in) = fluoride(out). With respect to regulation, na(+) is not transported, but it plays an essential structural role and its presence is essential for fluoride channel function. Fluoride-specific ion channel. Important for reducing fluoride concentration in the cell, thus reducing its toxicity. This is Fluoride-specific ion channel FluC from Bordetella bronchiseptica (strain ATCC BAA-588 / NCTC 13252 / RB50) (Alcaligenes bronchisepticus).